The sequence spans 795 residues: RINT1-like protein MAG2 (795 aa).

Residues 35–64 (TGLVSELQTEISELDQRLAGLNRQLESGLA) are a coiled coil. Residues 91–111 (TSVTRSASDSGKEEEATEHVA) form a disordered region. The span at 100 to 111 (SGKEEEATEHVA) shows a compositional bias: basic and acidic residues. The RINT1/TIP20 domain occupies 207–795 (ALAMMRPQAI…KKVAKSRVFS (589 aa)).

The protein belongs to the RINT1 family. In terms of assembly, interacts with SEC20 and SYP81. Interacts with ZW10 (via the central region). Forms a complex with ZW10/MIP1, MIP2 and MIP3 on the endoplasmic reticulum. In terms of tissue distribution, highly expressed in dry seeds. Expressed at low levels in roots, rosette and cauline leaves, stems and flowers.

Its subcellular location is the endoplasmic reticulum membrane. Functionally, functions in the anterograde transport of storage protein precursors from the endoplasmic reticulum (ER) to the Golgi complex and in the retrograde transport from the Golgi complex to the ER. Forms a complex with ZW10/MIP1, MIP2 and MIP3 on the ER that may be responsible for efficient transport of seed storage proteins. Required for the responses to environmental stresses during seed germination and vegetative growth. Probably not involved in the retrograde transport from the ER to the apoplast. In Arabidopsis thaliana (Mouse-ear cress), this protein is RINT1-like protein MAG2.